Consider the following 307-residue polypeptide: Quinolinate synthase (307 aa).

Iminosuccinate is bound by residues histidine 23 and serine 40. Residue cysteine 86 participates in [4Fe-4S] cluster binding. Residues 112 to 114 and serine 129 contribute to the iminosuccinate site; that span reads YVN. Residue cysteine 173 coordinates [4Fe-4S] cluster. Iminosuccinate is bound by residues 199–201 and threonine 216; that span reads HPE. Cysteine 265 is a [4Fe-4S] cluster binding site.

It belongs to the quinolinate synthase family. Type 2 subfamily. Requires [4Fe-4S] cluster as cofactor.

Its subcellular location is the cytoplasm. The enzyme catalyses iminosuccinate + dihydroxyacetone phosphate = quinolinate + phosphate + 2 H2O + H(+). It participates in cofactor biosynthesis; NAD(+) biosynthesis; quinolinate from iminoaspartate: step 1/1. Catalyzes the condensation of iminoaspartate with dihydroxyacetone phosphate to form quinolinate. This Methanocaldococcus jannaschii (strain ATCC 43067 / DSM 2661 / JAL-1 / JCM 10045 / NBRC 100440) (Methanococcus jannaschii) protein is Quinolinate synthase.